We begin with the raw amino-acid sequence, 96 residues long: Cytoplasmic envelopment protein 3 (96 aa).

Gly-2 carries N-myristoyl glycine; by host lipidation. The Di-leucine-like internalization motif signature appears at 18–19; sequence LI. Residues 37–43 are asp/Glu-rich (acidic); sequence DIESEEE. Residue Ser-40 is modified to Phosphoserine. The segment at 44–96 is disordered; sequence GNFYVPPDMRGVTRAPGRQRLRSSDPPSRHTHRRTPGGACPATQFPPPMSDSE. Pro residues predominate over residues 87–96; that stretch reads QFPPPMSDSE.

It belongs to the herpesviridae cytoplasmic envelopment protein 3 family. As to quaternary structure, interacts with cytoplasmic envelopment protein 2; this interaction is essential for the proper localization of each protein to the assembly complex and thus for the production of infectious virus. Interacts with gE (via C-terminus). Interacts with gD (via C-terminus). Interacts with UL56. Myristoylation and palmitoylation (probably on one or more of the nearby cysteines at the N-terminus) enable membrane-binding and Golgi apparatus-specific targeting and are essential for efficient packaging. Post-translationally, phosphorylated. Phosphorylation does not seem to be required for recycling to the host Golgi apparatus. Packaging is selective for underphosphorylated forms.

The protein localises to the virion tegument. Its subcellular location is the virion membrane. It localises to the host cell membrane. The protein resides in the host Golgi apparatus membrane. Its function is as follows. Plays an important role in the cytoplasmic envelopment of tegument proteins and capsids during the assembly and egress processes. Also participates in viral entry at the fusion step probably by regulating the core fusion machinery. The polypeptide is Cytoplasmic envelopment protein 3 (Homo sapiens (Human)).